Consider the following 272-residue polypeptide: Phosphoglycolate phosphatase (272 aa).

The active-site Nucleophile is Asp19. Positions 19, 21, and 182 each coordinate Mg(2+).

This sequence belongs to the HAD-like hydrolase superfamily. CbbY/CbbZ/Gph/YieH family. It depends on Mg(2+) as a cofactor.

It catalyses the reaction 2-phosphoglycolate + H2O = glycolate + phosphate. The protein operates within organic acid metabolism; glycolate biosynthesis; glycolate from 2-phosphoglycolate: step 1/1. Specifically catalyzes the dephosphorylation of 2-phosphoglycolate. Is involved in the dissimilation of the intracellular 2-phosphoglycolate formed during the DNA repair of 3'-phosphoglycolate ends, a major class of DNA lesions induced by oxidative stress. The sequence is that of Phosphoglycolate phosphatase from Pseudomonas putida (strain ATCC 47054 / DSM 6125 / CFBP 8728 / NCIMB 11950 / KT2440).